The primary structure comprises 278 residues: Phosphatidylglycerol--prolipoprotein diacylglyceryl transferase (278 aa).

A run of 3 helical transmembrane segments spans residues 21–41 (WYGIIIAAGILLGYFIAQASV), 54–74 (IIFWSAIFGFIVARIYFVIFQ), and 88–108 (IWHGGIAIHGGLIGGFVTGII). Arg-136 is a binding site for a 1,2-diacyl-sn-glycero-3-phospho-(1'-sn-glycerol). A run of 2 helical transmembrane segments spans residues 176-196 (QPTFLYESLWDILGFVILILL) and 234-254 (IRVAQLMSIILILIGVIIMII).

The protein belongs to the Lgt family.

It is found in the cell membrane. The catalysed reaction is L-cysteinyl-[prolipoprotein] + a 1,2-diacyl-sn-glycero-3-phospho-(1'-sn-glycerol) = an S-1,2-diacyl-sn-glyceryl-L-cysteinyl-[prolipoprotein] + sn-glycerol 1-phosphate + H(+). It participates in protein modification; lipoprotein biosynthesis (diacylglyceryl transfer). In terms of biological role, catalyzes the transfer of the diacylglyceryl group from phosphatidylglycerol to the sulfhydryl group of the N-terminal cysteine of a prolipoprotein, the first step in the formation of mature lipoproteins. In Staphylococcus xylosus, this protein is Phosphatidylglycerol--prolipoprotein diacylglyceryl transferase.